We begin with the raw amino-acid sequence, 102 residues long: NADH-quinone oxidoreductase subunit K (102 aa).

A run of 3 helical transmembrane segments spans residues 5-25 (IAHYLTVSAVLFTLGVFGIFL), 31-51 (IVILMSVELILLAVNINFVAF), and 66-86 (FVLTVAAAEAAIGLAILVVFF).

The protein belongs to the complex I subunit 4L family. As to quaternary structure, NDH-1 is composed of 14 different subunits. Subunits NuoA, H, J, K, L, M, N constitute the membrane sector of the complex.

It localises to the cell inner membrane. It carries out the reaction a quinone + NADH + 5 H(+)(in) = a quinol + NAD(+) + 4 H(+)(out). NDH-1 shuttles electrons from NADH, via FMN and iron-sulfur (Fe-S) centers, to quinones in the respiratory chain. The immediate electron acceptor for the enzyme in this species is believed to be ubiquinone. Couples the redox reaction to proton translocation (for every two electrons transferred, four hydrogen ions are translocated across the cytoplasmic membrane), and thus conserves the redox energy in a proton gradient. This Mesorhizobium japonicum (strain LMG 29417 / CECT 9101 / MAFF 303099) (Mesorhizobium loti (strain MAFF 303099)) protein is NADH-quinone oxidoreductase subunit K.